The chain runs to 293 residues: ELMO domain-containing protein 2 (293 aa).

In terms of domain architecture, ELMO spans 126-282; the sequence is QHEKMLLKLW…KFHERIKGLL (157 aa).

Functionally, acts as a GTPase-activating protein (GAP) toward guanine nucleotide exchange factors like ARL2, ARL3, ARF1 and ARF6, but not for GTPases outside the Arf family. This chain is ELMO domain-containing protein 2 (Elmod2), found in Mus musculus (Mouse).